Reading from the N-terminus, the 342-residue chain is Serpentine receptor class gamma-69 (342 aa).

7 helical membrane passes run 11–31 (MAGL…SVVV), 51–71 (SLLY…HFLI), 106–126 (PIAI…IVAA), 140–160 (LFVL…IPCK), 191–211 (IAAV…LIAL), 222–242 (AEIS…IYAF), and 269–289 (FAID…STTV).

It belongs to the nematode receptor-like protein srg family.

The protein resides in the membrane. This Caenorhabditis elegans protein is Serpentine receptor class gamma-69 (srg-69).